Consider the following 383-residue polypeptide: Succinyl-diaminopimelate desuccinylase (383 aa).

H74 provides a ligand contact to Zn(2+). D76 is an active-site residue. Position 107 (D107) interacts with Zn(2+). The active-site Proton acceptor is E141. 3 residues coordinate Zn(2+): E142, E170, and H356.

Belongs to the peptidase M20A family. DapE subfamily. In terms of assembly, homodimer. Zn(2+) serves as cofactor. Co(2+) is required as a cofactor.

It carries out the reaction N-succinyl-(2S,6S)-2,6-diaminopimelate + H2O = (2S,6S)-2,6-diaminopimelate + succinate. It participates in amino-acid biosynthesis; L-lysine biosynthesis via DAP pathway; LL-2,6-diaminopimelate from (S)-tetrahydrodipicolinate (succinylase route): step 3/3. In terms of biological role, catalyzes the hydrolysis of N-succinyl-L,L-diaminopimelic acid (SDAP), forming succinate and LL-2,6-diaminopimelate (DAP), an intermediate involved in the bacterial biosynthesis of lysine and meso-diaminopimelic acid, an essential component of bacterial cell walls. The sequence is that of Succinyl-diaminopimelate desuccinylase from Cupriavidus pinatubonensis (strain JMP 134 / LMG 1197) (Cupriavidus necator (strain JMP 134)).